A 655-amino-acid chain; its full sequence is Interferon-induced GTP-binding protein Mx2 (655 aa).

The span at 1–18 (MVLSTEENTGVDSVNLPS) shows a compositional bias: polar residues. Positions 1 to 28 (MVLSTEENTGVDSVNLPSGETGLGEKDQ) are disordered. Positions 60 to 333 (DLALPAIAVI…LISHICKSLP (274 aa)) constitute a Dynamin-type G domain. The segment at 70 to 77 (GDQSSGKS) is G1 motif. Position 70–77 (70–77 (GDQSSGKS)) interacts with GTP. The tract at residues 95 to 97 (VTR) is G2 motif. The tract at residues 171–174 (DLPG) is G3 motif. GTP is bound by residues 171-175 (DLPGI) and 240-243 (TKPD). The segment at 240-243 (TKPD) is G4 motif. A G5 motif region spans residues 272-275 (KCRG). The tract at residues 542-562 (EAEEEKKTKHGTSSSSQSQDL) is disordered. A compositionally biased stretch (low complexity) spans 552–562 (GTSSSSQSQDL). One can recognise a GED domain in the interval 567–655 (MAEIFQHLNA…ARRRLAKFPG (89 aa)).

This sequence belongs to the TRAFAC class dynamin-like GTPase superfamily. Dynamin/Fzo/YdjA family.

The protein localises to the cytoplasm. Interferon-induced dynamin-like GTPase with antiviral activity against vesicular stomatitis virus (VSV) and Hantaan virus (HNTV). This chain is Interferon-induced GTP-binding protein Mx2 (Mx2), found in Mus musculus (Mouse).